The following is a 346-amino-acid chain: [LysW]-lysine/[LysW]-ornithine hydrolase (346 aa).

A Zn(2+)-binding site is contributed by histidine 68. Aspartate 70 is an active-site residue. Zn(2+) is bound at residue aspartate 92. The active-site Proton acceptor is glutamate 122. Zn(2+)-binding residues include glutamate 123, glutamate 146, and histidine 317.

It belongs to the peptidase M20A family. LysK subfamily. Requires Zn(2+) as cofactor. Co(2+) serves as cofactor.

The protein localises to the cytoplasm. It carries out the reaction [amino-group carrier protein]-C-terminal-gamma-(L-lysyl)-L-glutamate + H2O = [amino-group carrier protein]-C-terminal-L-glutamate + L-lysine. It catalyses the reaction [amino-group carrier protein]-C-terminal-gamma-(L-ornithyl)-L-glutamate + H2O = [amino-group carrier protein]-C-terminal-L-glutamate + L-ornithine. It functions in the pathway amino-acid biosynthesis; L-lysine biosynthesis via AAA pathway; L-lysine from L-alpha-aminoadipate (Thermus route): step 5/5. The protein operates within amino-acid biosynthesis; L-arginine biosynthesis. Catalyzes the release of L-lysine from [LysW]-gamma-L-lysine and the release of L-ornithine from [LysW]-L-ornithine. In Saccharolobus islandicus (strain M.16.27) (Sulfolobus islandicus), this protein is [LysW]-lysine/[LysW]-ornithine hydrolase.